A 582-amino-acid chain; its full sequence is Putative transcriptional regulator HVO_1357 (582 aa).

The region spanning 19–129 (VVLVVDDDED…EVKETVEELL (111 aa)) is the Response regulatory domain. 4-aspartylphosphate is present on D67. A coiled-coil region spans residues 165-203 (LSDLRSRLEAVRAEHEAAIRNREAQLDRLNRTNELLRDV). The HTH bat-type domain occupies 517–569 (LTDRQRTVLETSLVSGYFEWPRGSTAEEVADSLGISPPTLHEHLRTAERKLIE).

Functionally, may be part of a signal-dependent gene regulation cascade that is relevant to swimming motility. May be involved in the transcription regulation of target genes. This is Putative transcriptional regulator HVO_1357 from Haloferax volcanii (strain ATCC 29605 / DSM 3757 / JCM 8879 / NBRC 14742 / NCIMB 2012 / VKM B-1768 / DS2) (Halobacterium volcanii).